A 248-amino-acid polypeptide reads, in one-letter code: Probable transcriptional regulatory protein Noc_0137 (248 aa).

Belongs to the TACO1 family.

Its subcellular location is the cytoplasm. The polypeptide is Probable transcriptional regulatory protein Noc_0137 (Nitrosococcus oceani (strain ATCC 19707 / BCRC 17464 / JCM 30415 / NCIMB 11848 / C-107)).